The chain runs to 445 residues: Phosphoglucosamine mutase (445 aa).

Catalysis depends on Ser-102, which acts as the Phosphoserine intermediate. Mg(2+)-binding residues include Ser-102, Asp-241, Asp-243, and Asp-245. At Ser-102 the chain carries Phosphoserine.

It belongs to the phosphohexose mutase family. Requires Mg(2+) as cofactor. Post-translationally, activated by phosphorylation.

It carries out the reaction alpha-D-glucosamine 1-phosphate = D-glucosamine 6-phosphate. Functionally, catalyzes the conversion of glucosamine-6-phosphate to glucosamine-1-phosphate. The polypeptide is Phosphoglucosamine mutase (Hahella chejuensis (strain KCTC 2396)).